The following is a 293-amino-acid chain: AA9 family lytic polysaccharide monooxygenase E (293 aa).

The N-terminal stretch at methionine 1 to alanine 19 is a signal peptide. The Cu(2+) site is built by histidine 20 and histidine 90. An intrachain disulfide couples cysteine 59 to cysteine 172. Residues histidine 158 and glutamine 167 each contribute to the O2 site. Tyrosine 169 lines the Cu(2+) pocket. One can recognise a CBM1 domain in the interval cysteine 257 to valine 293.

The protein belongs to the polysaccharide monooxygenase AA9 family. Requires Cu(2+) as cofactor.

It is found in the secreted. The enzyme catalyses [(1-&gt;4)-beta-D-glucosyl]n+m + reduced acceptor + O2 = 4-dehydro-beta-D-glucosyl-[(1-&gt;4)-beta-D-glucosyl]n-1 + [(1-&gt;4)-beta-D-glucosyl]m + acceptor + H2O.. Its activity is regulated as follows. Glucose dehydrogenase and aryl-alcohol quinone oxidoreductases regulate the oxidative degradation of cellulose since they can act as catalytically efficient electron donors for LPMO9E. In terms of biological role, lytic polysaccharide monooxygenase (LPMO) that depolymerizes crystalline and amorphous polysaccharides via the oxidation of scissile alpha- or beta-(1-4)-glycosidic bonds, yielding only C1 oxidation products. Catalysis by LPMOs requires the reduction of the active-site copper from Cu(II) to Cu(I) by a reducing agent and H(2)O(2) or O(2) as a cosubstrate. Improves the progression of lytic enzymes in delignified miscanthus cell walls. This boosting effect dependents on the cellular type which indicates contrasted recalcitrance levels in plant tissues. The polypeptide is AA9 family lytic polysaccharide monooxygenase E (Podospora anserina (strain S / ATCC MYA-4624 / DSM 980 / FGSC 10383) (Pleurage anserina)).